The chain runs to 152 residues: 3-hydroxyacyl-[acyl-carrier-protein] dehydratase FabZ (152 aa).

His58 is a catalytic residue.

Belongs to the thioester dehydratase family. FabZ subfamily.

It is found in the cytoplasm. It catalyses the reaction a (3R)-hydroxyacyl-[ACP] = a (2E)-enoyl-[ACP] + H2O. In terms of biological role, involved in unsaturated fatty acids biosynthesis. Catalyzes the dehydration of short chain beta-hydroxyacyl-ACPs and long chain saturated and unsaturated beta-hydroxyacyl-ACPs. The protein is 3-hydroxyacyl-[acyl-carrier-protein] dehydratase FabZ of Prochlorococcus marinus (strain MIT 9312).